A 290-amino-acid polypeptide reads, in one-letter code: UPF0046 protein K07C11.7 (290 aa).

The N-terminal stretch at 1–22 (MFHFSIGTVLISICWLAQWMEA) is a signal peptide. N-linked (GlcNAc...) asparagine glycosylation occurs at N204.

The protein belongs to the UPF0046 family.

The polypeptide is UPF0046 protein K07C11.7 (Caenorhabditis elegans).